We begin with the raw amino-acid sequence, 193 residues long: Pyridoxal 5'-phosphate synthase subunit PdxT (193 aa).

48 to 50 (GES) is a binding site for L-glutamine. The Nucleophile role is filled by Cys80. Residues Arg112 and 140 to 141 (IR) contribute to the L-glutamine site. Catalysis depends on charge relay system residues His176 and Glu178.

The protein belongs to the glutaminase PdxT/SNO family. In the presence of PdxS, forms a dodecamer of heterodimers. Only shows activity in the heterodimer.

It catalyses the reaction aldehydo-D-ribose 5-phosphate + D-glyceraldehyde 3-phosphate + L-glutamine = pyridoxal 5'-phosphate + L-glutamate + phosphate + 3 H2O + H(+). The catalysed reaction is L-glutamine + H2O = L-glutamate + NH4(+). It participates in cofactor biosynthesis; pyridoxal 5'-phosphate biosynthesis. In terms of biological role, catalyzes the hydrolysis of glutamine to glutamate and ammonia as part of the biosynthesis of pyridoxal 5'-phosphate. The resulting ammonia molecule is channeled to the active site of PdxS. This chain is Pyridoxal 5'-phosphate synthase subunit PdxT, found in Mycolicibacterium smegmatis (strain ATCC 700084 / mc(2)155) (Mycobacterium smegmatis).